The primary structure comprises 497 residues: Glycerol kinase (497 aa).

Thr-13 is an ADP binding site. Thr-13, Thr-14, and Ser-15 together coordinate ATP. Position 13 (Thr-13) interacts with sn-glycerol 3-phosphate. Residue Arg-17 coordinates ADP. Sn-glycerol 3-phosphate is bound by residues Arg-83, Glu-84, and Tyr-135. 3 residues coordinate glycerol: Arg-83, Glu-84, and Tyr-135. His-231 bears the Phosphohistidine; by HPr mark. Asp-245 is a sn-glycerol 3-phosphate binding site. Residues Asp-245 and Gln-246 each contribute to the glycerol site. Residues Thr-267 and Gly-310 each contribute to the ADP site. Thr-267, Gly-310, Gln-314, and Gly-411 together coordinate ATP. Positions 411 and 415 each coordinate ADP.

The protein belongs to the FGGY kinase family. In terms of assembly, homotetramer and homodimer (in equilibrium). The phosphoenolpyruvate-dependent sugar phosphotransferase system (PTS), including enzyme I, and histidine-containing protein (HPr) are required for the phosphorylation, which leads to the activation of the enzyme.

The enzyme catalyses glycerol + ATP = sn-glycerol 3-phosphate + ADP + H(+). It functions in the pathway polyol metabolism; glycerol degradation via glycerol kinase pathway; sn-glycerol 3-phosphate from glycerol: step 1/1. With respect to regulation, activated by phosphorylation and inhibited by fructose 1,6-bisphosphate (FBP). Its function is as follows. Key enzyme in the regulation of glycerol uptake and metabolism. Catalyzes the phosphorylation of glycerol to yield sn-glycerol 3-phosphate. This is Glycerol kinase from Listeria innocua serovar 6a (strain ATCC BAA-680 / CLIP 11262).